A 233-amino-acid chain; its full sequence is Adenylyl cyclase-associated protein 1 (233 aa).

Y14 is subject to Phosphotyrosine. Position 17 is a phosphoserine (S17). 2 disordered regions span residues 43–71 (VDKXGPVAKELSGLPSGPSAGSGPPPSAL) and 91–129 (DEKTHKNPADKAQSGPVRXGPKPFSASKPGISPSPKPVT). A compositionally biased stretch (low complexity) spans 53 to 64 (LSGLPSGPSAGS). K101 is modified (N6-methyllysine). 4 positions are modified to phosphoserine: S104, S115, S122, and S124. A Glycyl lysine isopeptide (Lys-Gly) (interchain with G-Cter in SUMO1) cross-link involves residue K151. In terms of domain architecture, C-CAP/cofactor C-like spans 173–221 (VPXISINKXDGRHIYLSKNSLDCEIVSAKSSEMNVLIPTEGGDFNEFPV).

Belongs to the CAP family. As to quaternary structure, homodimer. Binds actin monomers.

Its subcellular location is the cell membrane. In terms of biological role, directly regulates filament dynamics and has been implicated in a number of complex developmental and morphological processes, including mRNA localization and the establishment of cell polarity. This Sus scrofa (Pig) protein is Adenylyl cyclase-associated protein 1 (CAP1).